The sequence spans 507 residues: Histidine ammonia-lyase (507 aa).

Residues 142 to 144 constitute a cross-link (5-imidazolinone (Ala-Gly)); that stretch reads ASG. Ser143 carries the post-translational modification 2,3-didehydroalanine (Ser).

Belongs to the PAL/histidase family. In terms of processing, contains an active site 4-methylidene-imidazol-5-one (MIO), which is formed autocatalytically by cyclization and dehydration of residues Ala-Ser-Gly.

The protein localises to the cytoplasm. The enzyme catalyses L-histidine = trans-urocanate + NH4(+). It functions in the pathway amino-acid degradation; L-histidine degradation into L-glutamate; N-formimidoyl-L-glutamate from L-histidine: step 1/3. The polypeptide is Histidine ammonia-lyase (Symbiobacterium thermophilum (strain DSM 24528 / JCM 14929 / IAM 14863 / T)).